The following is a 219-amino-acid chain: Ribose-5-phosphate isomerase A (219 aa).

Residues Ser28–Thr31, Asp81–Asp84, and Lys94–Gly97 each bind substrate. The Proton acceptor role is filled by Glu103. Lys121 provides a ligand contact to substrate.

The protein belongs to the ribose 5-phosphate isomerase family. In terms of assembly, homodimer.

It catalyses the reaction aldehydo-D-ribose 5-phosphate = D-ribulose 5-phosphate. The protein operates within carbohydrate degradation; pentose phosphate pathway; D-ribose 5-phosphate from D-ribulose 5-phosphate (non-oxidative stage): step 1/1. Its function is as follows. Catalyzes the reversible conversion of ribose-5-phosphate to ribulose 5-phosphate. This Haemophilus influenzae (strain PittGG) protein is Ribose-5-phosphate isomerase A.